Consider the following 106-residue polypeptide: Iron-sulfur cluster assembly protein CyaY (106 aa).

It belongs to the frataxin family.

Functionally, involved in iron-sulfur (Fe-S) cluster assembly. May act as a regulator of Fe-S biogenesis. The polypeptide is Iron-sulfur cluster assembly protein CyaY (Escherichia coli O6:H1 (strain CFT073 / ATCC 700928 / UPEC)).